Reading from the N-terminus, the 161-residue chain is Putative 4-hydroxy-4-methyl-2-oxoglutarate aldolase (161 aa).

Substrate contacts are provided by residues 78–81 (GDVI) and Arg-100. Asp-101 is an a divalent metal cation binding site.

Belongs to the class II aldolase/RraA-like family. As to quaternary structure, homotrimer. A divalent metal cation is required as a cofactor.

The enzyme catalyses 4-hydroxy-4-methyl-2-oxoglutarate = 2 pyruvate. The catalysed reaction is oxaloacetate + H(+) = pyruvate + CO2. Its function is as follows. Catalyzes the aldol cleavage of 4-hydroxy-4-methyl-2-oxoglutarate (HMG) into 2 molecules of pyruvate. Also contains a secondary oxaloacetate (OAA) decarboxylase activity due to the common pyruvate enolate transition state formed following C-C bond cleavage in the retro-aldol and decarboxylation reactions. The chain is Putative 4-hydroxy-4-methyl-2-oxoglutarate aldolase from Mycobacterium avium (strain 104).